A 109-amino-acid polypeptide reads, in one-letter code: Nucleoid-associated protein LJ_0424 (109 aa).

It belongs to the YbaB/EbfC family. As to quaternary structure, homodimer.

Its subcellular location is the cytoplasm. It localises to the nucleoid. Its function is as follows. Binds to DNA and alters its conformation. May be involved in regulation of gene expression, nucleoid organization and DNA protection. The polypeptide is Nucleoid-associated protein LJ_0424 (Lactobacillus johnsonii (strain CNCM I-12250 / La1 / NCC 533)).